The chain runs to 166 residues: Putative pre-16S rRNA nuclease (166 aa).

The interval 1-24 (MPDTAAPTPDRPGPDDPGRGRRLG) is disordered.

This sequence belongs to the YqgF nuclease family.

The protein localises to the cytoplasm. Functionally, could be a nuclease involved in processing of the 5'-end of pre-16S rRNA. This Mycobacteroides abscessus (strain ATCC 19977 / DSM 44196 / CCUG 20993 / CIP 104536 / JCM 13569 / NCTC 13031 / TMC 1543 / L948) (Mycobacterium abscessus) protein is Putative pre-16S rRNA nuclease.